A 98-amino-acid chain; its full sequence is UPF0473 protein lp_2273 (98 aa).

This sequence belongs to the UPF0473 family.

The polypeptide is UPF0473 protein lp_2273 (Lactiplantibacillus plantarum (strain ATCC BAA-793 / NCIMB 8826 / WCFS1) (Lactobacillus plantarum)).